The chain runs to 705 residues: Pentatricopeptide repeat-containing protein At1g09410, mitochondrial (705 aa).

The N-terminal 11 residues, 1–11 (MKSQILLRRTY), are a transit peptide targeting the mitochondrion. 15 PPR repeats span residues 16–46 (PPPT…CDSK), 47–77 (SISS…MPDR), 78–112 (NIIS…NVVS), 113–139 (WTAL…MPEK), 140–170 (NKVS…IPDK), 171–205 (DNIA…SVIT), 206–232 (WTTM…MPEK), 233–267 (TEVS…PVIA), 268–294 (CNAM…MKER), 295–329 (NDAS…GVRP), 330–364 (TFPT…QFDV), 365–395 (DVYV…FPSK), 396–430 (DIIM…GSTK), 432–462 (NEVT…MESV), and 468–498 (ITAH…MTVE). Positions 503-578 (VWGSLLGACR…SPGCSWTEVE (76 aa)) are type E motif. Residues 579–610 (NKVHAFTRGGINSHPEQESILKILDELDGLLR) form a type E(+) motif region. Residues 611–705 (EAGYNPDCSY…NGECSCKDYW (95 aa)) are type DYW motif.

This sequence belongs to the PPR family. PCMP-H subfamily.

The protein resides in the mitochondrion. This Arabidopsis thaliana (Mouse-ear cress) protein is Pentatricopeptide repeat-containing protein At1g09410, mitochondrial (PCMP-H18).